The following is a 98-amino-acid chain: NADH dehydrogenase [ubiquinone] 1 beta subcomplex subunit 3 (98 aa).

N-acetylalanine is present on A2. A pros-methylhistidine mark is found at H5, H7, and H9. N6-acetyllysine; alternate occurs at positions 23 and 34. N6-succinyllysine; alternate is present on residues K23 and K34. Residues V66–L88 form a helical membrane-spanning segment.

Belongs to the complex I NDUFB3 subunit family. As to quaternary structure, complex I is composed of 45 different subunits. In terms of processing, methylation at His residues by METTL9 enhances complex I-mediated mitochondrial respiration.

The protein localises to the mitochondrion inner membrane. Functionally, accessory subunit of the mitochondrial membrane respiratory chain NADH dehydrogenase (Complex I), that is believed not to be involved in catalysis. Complex I functions in the transfer of electrons from NADH to the respiratory chain. The immediate electron acceptor for the enzyme is believed to be ubiquinone. The polypeptide is NADH dehydrogenase [ubiquinone] 1 beta subcomplex subunit 3 (NDUFB3) (Gorilla gorilla gorilla (Western lowland gorilla)).